The sequence spans 599 residues: Elongation factor 4 (599 aa).

The 183-residue stretch at 2–184 (KNIRNFSIIA…RLVRDIPPPE (183 aa)) folds into the tr-type G domain. GTP-binding positions include 14–19 (DHGKST) and 131–134 (NKID).

This sequence belongs to the TRAFAC class translation factor GTPase superfamily. Classic translation factor GTPase family. LepA subfamily.

The protein localises to the cell inner membrane. The enzyme catalyses GTP + H2O = GDP + phosphate + H(+). Its function is as follows. Required for accurate and efficient protein synthesis under certain stress conditions. May act as a fidelity factor of the translation reaction, by catalyzing a one-codon backward translocation of tRNAs on improperly translocated ribosomes. Back-translocation proceeds from a post-translocation (POST) complex to a pre-translocation (PRE) complex, thus giving elongation factor G a second chance to translocate the tRNAs correctly. Binds to ribosomes in a GTP-dependent manner. The polypeptide is Elongation factor 4 (Escherichia coli O8 (strain IAI1)).